Consider the following 217-residue polypeptide: Chorionic somatomammotropin hormone 2 (217 aa).

The signal sequence occupies residues 1 to 26 (MAAGSRTSLLLAFALLCLPWLQEAGA). His44 serves as a coordination point for Zn(2+). Cys79 and Cys191 are oxidised to a cystine. Glu200 serves as a coordination point for Zn(2+). Cys208 and Cys215 form a disulfide bridge.

The protein belongs to the somatotropin/prolactin family. In terms of assembly, can be found in a monomeric as well as dimeric form.

The protein resides in the secreted. In terms of biological role, produced only during pregnancy and is involved in stimulating lactation, fetal growth and metabolism. Does not interact with GHR but only activates PRLR through zinc-induced dimerization. The sequence is that of Chorionic somatomammotropin hormone 2 (CSH2) from Homo sapiens (Human).